A 156-amino-acid chain; its full sequence is Small ribosomal subunit protein uS7 (156 aa).

This sequence belongs to the universal ribosomal protein uS7 family. Part of the 30S ribosomal subunit. Contacts proteins S9 and S11.

One of the primary rRNA binding proteins, it binds directly to 16S rRNA where it nucleates assembly of the head domain of the 30S subunit. Is located at the subunit interface close to the decoding center, probably blocks exit of the E-site tRNA. In Mycobacterium sp. (strain JLS), this protein is Small ribosomal subunit protein uS7.